Consider the following 162-residue polypeptide: NADH-quinone oxidoreductase subunit I (162 aa).

4Fe-4S ferredoxin-type domains follow at residues 54-83 (RRYENGEERCIACKLCEAVCPAMAITIESE) and 93-122 (TRYDIDLTKCIFCGFCEESCPVDSIVETQI). [4Fe-4S] cluster-binding residues include C63, C66, C69, C73, C102, C105, C108, and C112.

This sequence belongs to the complex I 23 kDa subunit family. NDH-1 is composed of 14 different subunits. Subunits NuoA, H, J, K, L, M, N constitute the membrane sector of the complex. Requires [4Fe-4S] cluster as cofactor.

The protein resides in the cell inner membrane. The catalysed reaction is a quinone + NADH + 5 H(+)(in) = a quinol + NAD(+) + 4 H(+)(out). Functionally, NDH-1 shuttles electrons from NADH, via FMN and iron-sulfur (Fe-S) centers, to quinones in the respiratory chain. The immediate electron acceptor for the enzyme in this species is believed to be ubiquinone. Couples the redox reaction to proton translocation (for every two electrons transferred, four hydrogen ions are translocated across the cytoplasmic membrane), and thus conserves the redox energy in a proton gradient. The sequence is that of NADH-quinone oxidoreductase subunit I from Burkholderia thailandensis (strain ATCC 700388 / DSM 13276 / CCUG 48851 / CIP 106301 / E264).